Here is a 430-residue protein sequence, read N- to C-terminus: T-kininogen 2 (430 aa).

A signal peptide spans 1 to 18; that stretch reads MKLITILLLCSRLLPSLA. Pyrrolidone carboxylic acid is present on Gln19. The 104-residue stretch at 28–131 folds into the Cystatin kininogen-type 1 domain; it reads CNDETVFQAV…TQICNITPGK (104 aa). 9 disulfides stabilise this stretch: Cys28–Cys404, Cys83–Cys94, Cys107–Cys125, Cys141–Cys144, Cys205–Cys217, Cys228–Cys247, Cys263–Cys266, Cys327–Cys339, and Cys350–Cys369. An N-linked (GlcNAc...) asparagine glycan is attached at Asn82. One can recognise a Cystatin kininogen-type 2 domain in the interval 150–253; that stretch reads MDSSDLKPVL…SQSCDLYPGD (104 aa). N-linked (GlcNAc...) asparagine glycosylation is found at Asn168 and Asn204. The Cystatin kininogen-type 3 domain maps to 272 to 375; the sequence is VDSPELKEAL…TVRCQALDMM (104 aa). An N-linked (GlcNAc...) asparagine glycan is attached at Asn326. The tract at residues 410–430 is disordered; that stretch reads LSKAGAGPAPDHQAEASTVTP.

As T-kinin is preceded by a Met instead of an Arg or Lys, it is not released from its precursor by either tissue or plasma kallikrein. As to expression, plasma.

It localises to the secreted. The protein resides in the extracellular space. Functionally, kininogens are plasma glycoproteins with a number of functions: (1) as precursor of the active peptide bradykinin they effect smooth muscle contraction, induction of hypotension and increase of vascular permeability. (2) They play a role in blood coagulation by helping to position optimally prekallikrein and factor XI next to factor XII. (3) They are inhibitor of thiol proteases. This chain is T-kininogen 2, found in Rattus norvegicus (Rat).